We begin with the raw amino-acid sequence, 72 residues long: Large ribosomal subunit protein bL31 (72 aa).

Residues C16, C18, C37, and C40 each coordinate Zn(2+).

The protein belongs to the bacterial ribosomal protein bL31 family. Type A subfamily. In terms of assembly, part of the 50S ribosomal subunit. Zn(2+) serves as cofactor.

Its function is as follows. Binds the 23S rRNA. The protein is Large ribosomal subunit protein bL31 of Buchnera aphidicola subsp. Acyrthosiphon pisum (strain APS) (Acyrthosiphon pisum symbiotic bacterium).